The chain runs to 2710 residues: MANFSSHIQELRELIAASSTTTSTSAPASVHFEVKLREVLPNLLRDYVVPSSPTADGREATAVLKLLSYTAGKFPGVFFHGRAADVIRVIGRVLPFFAEPNFRSRHEIIFDTVWSLLSLLRTGDREAYRQFFLDVMVAVQDVLYVVASMHGDRPSGVLTERYLVKCLCGSFSDILDSPGIFSDLPDSCQPKNGPGVLVDLTGETRWRPFATMLIKLVNKCLADGTLYVEGLVNMPFVSAACSIICYGDESLHKVCFDFARIVATVITVEILPVENIIRSIMCILSQDVNGLSDIRDADYDFSMGACLHALHSSCPGYIVAITASDIVNVFQRAVHTSRSSELQVAMCNAYKRIVELCSPRVWKPEILLKLLCLPKPCAKLIECIRLVVDKSGQSFLSSDDRDDGSSLLAKSEGLDLPKVGQKRIALDEENSFPKRLKMTEPRFSSGSFMVDELSAGVGQELEKDHGCDFRVQLYSLINCLSPDNHMAYPLEPAISIQVLSLLCLSLSVYPKTNLFSRISKQVLSWIPWICKQTTKICMFSFDVSLYFEAVQTVMLLQSFLPGHTKLFEDEPLLIGNGCTDFEYPRYADLINLLKLVSDDGYLTSQTCSEKLKCLAVQIIAKIGSRQNAECDLQVLELAIQSETGELQNEALMSLPIIVLYSGPRMLGAMFRKLETIGTLGCKKLWKSIAISLGFLSCLNGTTDCTDKVGNHCKLFLAKHCEQPILTLNLLRGFWCPQCDVRTVHIEDQVPIVDIALSEDKNIDFKINMFKAHSLFFKFLYAETSEECIVSIVEVLPRILKHSSRDVLLDMKFQWVQCVDFLLLHEMKAVRDAFSSVVSCFLETNAMDILFSDGTGMSGGTSRVKFMDKIKSAFTEAEDPQILLTLLESTAAIVKASDIHGEVFFCSFVLLIGQLGNHDYIVRVTALRLLQRCCTYCFKGGLELFLSKYFHVRDNLYDYLSSRLLTHPVVISEFAESVLGVKTEELIRRMVPSIIPKLIVSHQNNDQAVVTLNELASHLNSELVPLIVNSLPKVLSFALFYEDGQHLSSVLQFYHTETGTDSKEIFSAALPTLLDEIICFPGESDQIETDRRMAKISPTIQNIARILTGNDNLPEFLKNDFVRLLNSIDKKMLHSSDVNLQKQALQRIRKLVEMMGPYLSTHAPKIMVLLIFAIDKETLQMDGLDVLHFFIKRLAEVSCTSIKYVMSQVVAAFIPSLERCRERPLVHLGKIVEILEELVVKNIILLKQHIRELPLLPSLPSLSGVNKVIQEARGLMTLQDHLKDAVNGLNHESLNVRYMVACELNKLFNDRRGDITSLIIGEDIADLDIISSLIMSLLKGCAEESRTVVGQRLKLVCADCLGALGAVDPAKFKVMSCERFKIECSDDDLIFELIHKHLARAFRAASDTTVQDSAALAIQELLKLSGCQSLPNESSSCKMSKRGQKLWGRFSSYVKEIIAPCLTSRFHLPSVNDATLAGPIYRPTMSFRRWIYYWIRKLTSHATGSRSGIFGACRGIVRHDMPTAIYLLPYLVLNVVCYGTPEARQSITEEILSVLNAAASESSGAIVHGITGGQSEVCIQAVFTLLDNLGQWVDDLKQEIALSQSNYAMAGRQGGKLRDESNSMYDQDQLLVQCSNVAELLAAIPKVTLAKASFRCQAHARALMYFESHVREKSGSSNPAADCSGAFSDDDISFLMEIYGGLDEPDGLLGLANLRKSSTLQDQLIINEKAGNWAEVLTLCEQSLQMEPDSVHRHCDVLNCLLNMCHLQAMIAHVDGLVYRIPQSKKTWCMQGVQAAWRLGRWDLMDEYLAEADKGLVCRSSENNASFDMGLAKIFNAMMKKDQFMVAEKIAQSKQALLVPLAAAGMDSYMRAYPYIVKLHMLRELEDFNSLLGDESFLEKPFAADDPKFLKLTKDWENRLRCTQPSLWAREPLLAFRRMVYNLSHMNAQAGNCWLQYARLCRLAGHYETAHRAILEADASGAPNAHMEKAKYLWNIRKSDSAIAELQQTLLNMPADVLGPTVLSSLSSLSLALPNAPLSVTQASKENPDVSKTLLLYTRWIHYTGQKQSNDIKSLYSRVADLRPKWEKGFFCIAKFYDDLLVDARRRQEDKKIASGVGPVPPSSTGSLTTATEEKPWWDMLPVVLIQYARGLHRGHKNLFQALPRLLTLWFEFGSIYIQDGSSFNKPMKEVHIRLLGIMRGCLKDLPPYQWLTVLSQLISRICHQNIEVVKLVKCIVTSILREYPQQALWMMAAVSKSTVAARRDAAAEILQSAKKGSRRGSDSNALFMQFPSLIDHLIKLCFHPGQPKARAINISTEFSSLKRMMPLGIILPIQQALTVTLPSYDTNMTDQSTFRPFSVSEHPTIAGIADDAEILNSLQKPKKVVFIGSDGISRPFLCKPKDDLRKDSRMMEFNAMINRLLSKVPESRRRKLYIRTFAVVPLTEDCGMVEWVPNTRGLRQILQDIYITCGKFDRMKTNPQIKKIYDQLQGKMPEEMLKAKILPMFPPVFHKWFLTTFSEPAAWIRARAAYAHTTAVWSMVGHIVGLGDRHGENILLDSTTGDCIHVDFSCLFDKGLLLEKPEVVPFRFTQNMVDGLGITGYEGVFVKVCEITLSVLRTHKEALMTVLETFIHDPLVEWTKSHKSSGVEVRNPHAQRAISNITERLQGVVVGVNAAPSLPLSVEGQARRLIAEAVSHSNLGKMYVWWMAWF.

The 611-residue stretch at 1647–2257 (TLAKASFRCQ…LWMMAAVSKS (611 aa)) folds into the FAT domain. A PI3K/PI4K catalytic domain is found at 2368–2680 (IADDAEILNS…GVNAAPSLPL (313 aa)). The G-loop stretch occupies residues 2374–2380 (ILNSLQK). Residues 2545–2553 (GLGDRHGEN) form a catalytic loop region. The segment at 2565–2589 (HVDFSCLFDKGLLLEKPEVVPFRFT) is activation loop. One can recognise an FATC domain in the interval 2678–2710 (LPLSVEGQARRLIAEAVSHSNLGKMYVWWMAWF).

It belongs to the PI3/PI4-kinase family. ATM subfamily.

It is found in the nucleus. The enzyme catalyses L-seryl-[protein] + ATP = O-phospho-L-seryl-[protein] + ADP + H(+). It carries out the reaction L-threonyl-[protein] + ATP = O-phospho-L-threonyl-[protein] + ADP + H(+). In terms of biological role, probable serine/threonine kinase. Seems to play a central role in cell-cycle regulation by transmitting DNA damage signals to downstream effectors of cell-cycle progression. May recognize the substrate consensus sequence [ST]-Q and phosphorylate histone variant H2AX to form H2AXS139ph at sites of DNA damage, thereby regulating DNA damage response mechanism. In Oryza sativa subsp. japonica (Rice), this protein is Serine/threonine-protein kinase ATR.